A 206-amino-acid polypeptide reads, in one-letter code: FKBP-type 22 kDa peptidyl-prolyl cis-trans isomerase (206 aa).

A PPIase FKBP-type domain is found at 120–206; it reads TDRVRVHYTG…VFEVELLEIL (87 aa).

Homodimer.

It localises to the cytoplasm. The protein localises to the periplasm. The enzyme catalyses [protein]-peptidylproline (omega=180) = [protein]-peptidylproline (omega=0). Strongly inhibited by FK506. In terms of biological role, PPIases accelerate the folding of proteins. Catalyzes the cis-trans isomerization of proline imidic peptide bonds in oligopeptides. Displays a preference for substrates with a lysyl residue in the P1 position. In Escherichia coli (strain K12), this protein is FKBP-type 22 kDa peptidyl-prolyl cis-trans isomerase (fklB).